Reading from the N-terminus, the 184-residue chain is Putative tetraheme cytochrome-c type (184 aa).

The Cytoplasmic portion of the chain corresponds to 1-14 (MSKHAASSAKRFSL). A helical transmembrane segment spans residues 15 to 35 (LALGLMFVGGIVFVWAVDFGI). Residues 36 to 184 (KTTNTLEFCT…HEPTEPDDAS (149 aa)) are Periplasmic-facing. Heme-binding residues include Cys-44, Cys-47, Met-50, Cys-73, Cys-76, and His-77. Positions 89 and 95 each coordinate substrate. The heme site is built by Asp-95, Cys-133, Cys-136, His-137, Cys-165, Cys-168, His-169, and His-174.

It belongs to the NapC/NirT/NrfH family. Binds 4 heme groups per subunit.

The protein resides in the cell inner membrane. This Allochromatium vinosum (strain ATCC 17899 / DSM 180 / NBRC 103801 / NCIMB 10441 / D) (Chromatium vinosum) protein is Putative tetraheme cytochrome-c type.